A 120-amino-acid chain; its full sequence is NAD(P)H-quinone oxidoreductase subunit 3, chloroplastic (120 aa).

3 consecutive transmembrane segments (helical) span residues 9–29 (FFWA…LISG), 64–84 (MFAL…PWAM), and 88–108 (VLGV…IIGL).

This sequence belongs to the complex I subunit 3 family. In terms of assembly, NDH is composed of at least 16 different subunits, 5 of which are encoded in the nucleus.

The protein resides in the plastid. It localises to the chloroplast thylakoid membrane. It catalyses the reaction a plastoquinone + NADH + (n+1) H(+)(in) = a plastoquinol + NAD(+) + n H(+)(out). The enzyme catalyses a plastoquinone + NADPH + (n+1) H(+)(in) = a plastoquinol + NADP(+) + n H(+)(out). NDH shuttles electrons from NAD(P)H:plastoquinone, via FMN and iron-sulfur (Fe-S) centers, to quinones in the photosynthetic chain and possibly in a chloroplast respiratory chain. The immediate electron acceptor for the enzyme in this species is believed to be plastoquinone. Couples the redox reaction to proton translocation, and thus conserves the redox energy in a proton gradient. The chain is NAD(P)H-quinone oxidoreductase subunit 3, chloroplastic from Nicotiana tabacum (Common tobacco).